Consider the following 325-residue polypeptide: Glycerol-3-phosphate dehydrogenase [NAD(P)+] (325 aa).

The NADPH site is built by Ser-14, Phe-15, Arg-35, and Lys-109. Residues Lys-109 and Gly-137 each contribute to the sn-glycerol 3-phosphate site. Position 141 (Ala-141) interacts with NADPH. Positions 192, 247, 257, 258, and 259 each coordinate sn-glycerol 3-phosphate. The active-site Proton acceptor is Lys-192. Arg-258 serves as a coordination point for NADPH. Leu-282 and Glu-284 together coordinate NADPH.

Belongs to the NAD-dependent glycerol-3-phosphate dehydrogenase family.

Its subcellular location is the cytoplasm. It catalyses the reaction sn-glycerol 3-phosphate + NAD(+) = dihydroxyacetone phosphate + NADH + H(+). The enzyme catalyses sn-glycerol 3-phosphate + NADP(+) = dihydroxyacetone phosphate + NADPH + H(+). The protein operates within membrane lipid metabolism; glycerophospholipid metabolism. Functionally, catalyzes the reduction of the glycolytic intermediate dihydroxyacetone phosphate (DHAP) to sn-glycerol 3-phosphate (G3P), the key precursor for phospholipid synthesis. In Rickettsia conorii (strain ATCC VR-613 / Malish 7), this protein is Glycerol-3-phosphate dehydrogenase [NAD(P)+].